A 119-amino-acid polypeptide reads, in one-letter code: Large ribosomal subunit protein uL18 (119 aa).

The protein belongs to the universal ribosomal protein uL18 family. Part of the 50S ribosomal subunit; part of the 5S rRNA/L5/L18/L25 subcomplex. Contacts the 5S and 23S rRNAs.

Functionally, this is one of the proteins that bind and probably mediate the attachment of the 5S RNA into the large ribosomal subunit, where it forms part of the central protuberance. This Solibacter usitatus (strain Ellin6076) protein is Large ribosomal subunit protein uL18.